A 582-amino-acid chain; its full sequence is Aspartate--tRNA(Asp/Asn) ligase (582 aa).

E177 contacts L-aspartate. The interval 201 to 204 is aspartate; the sequence is QLFK. R223 serves as a coordination point for L-aspartate. Residues 223 to 225 and Q232 contribute to the ATP site; that span reads RDE. H447 contacts L-aspartate. An ATP-binding site is contributed by E481. R488 lines the L-aspartate pocket. 533–536 contributes to the ATP binding site; it reads GLDR.

Belongs to the class-II aminoacyl-tRNA synthetase family. Type 1 subfamily. As to quaternary structure, homodimer.

It localises to the cytoplasm. It catalyses the reaction tRNA(Asx) + L-aspartate + ATP = L-aspartyl-tRNA(Asx) + AMP + diphosphate. Aspartyl-tRNA synthetase with relaxed tRNA specificity since it is able to aspartylate not only its cognate tRNA(Asp) but also tRNA(Asn). Reaction proceeds in two steps: L-aspartate is first activated by ATP to form Asp-AMP and then transferred to the acceptor end of tRNA(Asp/Asn). This is Aspartate--tRNA(Asp/Asn) ligase from Chlamydia trachomatis serovar A (strain ATCC VR-571B / DSM 19440 / HAR-13).